The following is a 326-amino-acid chain: Fructose-1,6-bisphosphatase class 1 2 (326 aa).

4 residues coordinate Mg(2+): Glu84, Asp103, Leu105, and Asp106. Substrate-binding positions include 106–109 (DGSS), Asn198, and Lys262. Glu268 serves as a coordination point for Mg(2+).

It belongs to the FBPase class 1 family. As to quaternary structure, homotetramer. Mg(2+) is required as a cofactor.

It localises to the cytoplasm. It catalyses the reaction beta-D-fructose 1,6-bisphosphate + H2O = beta-D-fructose 6-phosphate + phosphate. It functions in the pathway carbohydrate biosynthesis; gluconeogenesis. The polypeptide is Fructose-1,6-bisphosphatase class 1 2 (Pseudoalteromonas translucida (strain TAC 125)).